Consider the following 147-residue polypeptide: 3-dehydroquinate dehydratase (147 aa).

Catalysis depends on Tyr26, which acts as the Proton acceptor. Substrate is bound by residues Asn77, His83, and Asp90. The active-site Proton donor is the His103. Residues 104-105 (LS) and Arg114 each bind substrate.

Belongs to the type-II 3-dehydroquinase family. Homododecamer.

It carries out the reaction 3-dehydroquinate = 3-dehydroshikimate + H2O. The protein operates within metabolic intermediate biosynthesis; chorismate biosynthesis; chorismate from D-erythrose 4-phosphate and phosphoenolpyruvate: step 3/7. In terms of biological role, catalyzes a trans-dehydration via an enolate intermediate. This is 3-dehydroquinate dehydratase from Proteus mirabilis (strain HI4320).